Reading from the N-terminus, the 498-residue chain is L-amino acid oxidase Bs29 (498 aa).

Positions S1 to A3 are cleaved as a signal peptide. A disulfide bridge links C12 with C175. FAD is bound by residues M45–S46, E65–A66, R73, and G89–R92. Residue R92 coordinates substrate. N174 carries N-linked (GlcNAc...) asparagine glycosylation. H225 contributes to the substrate binding site. V263 lines the FAD pocket. C333 and C414 are joined by a disulfide. Y374 serves as a coordination point for substrate. Residues E459 and G466 to T471 each bind FAD. G466–W467 contributes to the substrate binding site.

Belongs to the flavin monoamine oxidase family. FIG1 subfamily. Monomer. This is in contrast with most of its orthologs, that are non-covalently linked homodimers. Requires FAD as cofactor. As to expression, expressed by the venom gland.

The protein localises to the secreted. It catalyses the reaction an L-alpha-amino acid + O2 + H2O = a 2-oxocarboxylate + H2O2 + NH4(+). The catalysed reaction is L-leucine + O2 + H2O = 4-methyl-2-oxopentanoate + H2O2 + NH4(+). Catalyzes an oxidative deamination of predominantly hydrophobic and aromatic L-amino acids, thus producing hydrogen peroxide that may contribute to the diverse toxic effects of this enzyme. Shows activity on L-Leu. Damage cell membranes of the Gram-positive bacteria S.aureus (MIC=4 ug/ml and MBC=8 ug/ml) and the Gram-negative bacteria A.baumanni (MIC=2 ug/ml and MBC=4 ug/ml). This antibacterial activity is dependent on the production of hydrogen peroxyde, since it is inhibited by catalase, a hydrogen peroxyde scavenger. The sequence is that of L-amino acid oxidase Bs29 from Bothriechis schlegelii (Eyelash palm pitviper).